The chain runs to 311 residues: D-alanine--D-alanine ligase (311 aa).

One can recognise an ATP-grasp domain in the interval 106–301; the sequence is KLLWRGAELP…FDELCWRILL (196 aa). ATP is bound at residue 132–187; that stretch reads IGSVGLPLMIKPAHEGSSIGMAKVERPEELEAARAEAARYDDLVLAERWIEGGEYT. Positions 255, 268, and 270 each coordinate Mg(2+).

The protein belongs to the D-alanine--D-alanine ligase family. Mg(2+) is required as a cofactor. The cofactor is Mn(2+).

It is found in the cytoplasm. The catalysed reaction is 2 D-alanine + ATP = D-alanyl-D-alanine + ADP + phosphate + H(+). It participates in cell wall biogenesis; peptidoglycan biosynthesis. Cell wall formation. The protein is D-alanine--D-alanine ligase of Alkalilimnicola ehrlichii (strain ATCC BAA-1101 / DSM 17681 / MLHE-1).